A 535-amino-acid chain; its full sequence is Probable inorganic phosphate transporter 1-7 (535 aa).

The Cytoplasmic segment spans residues 1-24; that stretch reads MAGDQLNVLNALDVAKTQWYHFTA. Residues 25-45 form a helical membrane-spanning segment; the sequence is IIIAGMGFFTDAYDLFCISLV. The Extracellular portion of the chain corresponds to 46-70; it reads TKLLGRIYYHVDGSEKPGTLPPNVS. The helical transmembrane segment at 71 to 91 threads the bilayer; sequence AAVNGVAFCGTLAGQLFFGWL. Residues 92–99 lie on the Cytoplasmic side of the membrane; that stretch reads GDKLGRKK. Residues 100–120 traverse the membrane as a helical segment; the sequence is VYGMTLMVMVLCSIASGLSFG. Residues 121 to 131 are Extracellular-facing; sequence SNPKTVMTTLC. A helical membrane pass occupies residues 132 to 152; sequence FFRFWLGFGIGGDYPLSATIM. The Cytoplasmic portion of the chain corresponds to 153–161; it reads SEYANKKTR. The chain crosses the membrane as a helical span at residues 162-182; that stretch reads GAFIAAVFAMQGFGILTGGIF. The Extracellular portion of the chain corresponds to 183-211; that stretch reads AIIVSAAFEAKFPAPTYQIDALASTVPQA. Residues 212–232 traverse the membrane as a helical segment; sequence DYVWRIILMVGALPAAMTYYS. Residues 233–289 are Cytoplasmic-facing; that stretch reads RSKMPETARYTALVAKDAKLAASNMSKVLQVEIEAEQQGTEDKSNSFGLFSKEFMKR. The helical transmembrane segment at 290-310 threads the bilayer; that stretch reads HGLHLLGTTSTWFLLDIAFYS. The Extracellular portion of the chain corresponds to 311–345; sequence QNLFQKDIFSAIGWIPPAQTMNAIQEVFKIARAQT. Residues 346–366 traverse the membrane as a helical segment; sequence LIALCSTVPGYWFTVAFIDVI. Over 367–368 the chain is Cytoplasmic; the sequence is GR. The helical transmembrane segment at 369–389 threads the bilayer; sequence FAIQMMGFFFMTVFMFALAIP. Topologically, residues 390 to 399 are extracellular; that stretch reads YDHWTHKENR. The chain crosses the membrane as a helical span at residues 400-420; it reads IGFVAMYSLTFFFANFGPNAT. At 421-438 the chain is on the cytoplasmic side; it reads TFVVPAEIFPARFRSTCH. A helical membrane pass occupies residues 439–459; the sequence is GISAASGKLGAMVGAFGFLYL. Over 460–480 the chain is Extracellular; that stretch reads AQSPDKTKTEHGYPPGIGVKN. Residues 481–501 traverse the membrane as a helical segment; it reads SLIVLGVVNLLGMVFTLLVPE. Over 502–535 the chain is Cytoplasmic; that stretch reads SKGKSLEEMSGENEQNDESSSSSNNNSNNAVSTA. Positions 506–535 are disordered; the sequence is SLEEMSGENEQNDESSSSSNNNSNNAVSTA. Residues 519-535 are compositionally biased toward low complexity; that stretch reads ESSSSSNNNSNNAVSTA. At Ser520 the chain carries Phosphoserine.

This sequence belongs to the major facilitator superfamily. Phosphate:H(+) symporter (TC 2.A.1.9) family. As to expression, mature pollen.

Its subcellular location is the membrane. Its function is as follows. High-affinity transporter for external inorganic phosphate. This is Probable inorganic phosphate transporter 1-7 (PHT1-7) from Arabidopsis thaliana (Mouse-ear cress).